The sequence spans 226 residues: uncharacterized protein (226 aa).

A helical transmembrane segment spans residues 203-225 (FGISDIYTSTLSFGLIISLFYLL).

It localises to the membrane. This is an uncharacterized protein from Acanthamoeba polyphaga (Amoeba).